Here is a 567-residue protein sequence, read N- to C-terminus: UPF0313 protein CTN_0332 (567 aa).

The Radical SAM core domain maps to 288–560 (KAIETVKFSI…NKMKENVLFK (273 aa)). C303, C307, and C310 together coordinate [4Fe-4S] cluster.

It belongs to the UPF0313 family. [4Fe-4S] cluster serves as cofactor.

This Thermotoga neapolitana (strain ATCC 49049 / DSM 4359 / NBRC 107923 / NS-E) protein is UPF0313 protein CTN_0332.